The following is a 192-amino-acid chain: Phosphoheptose isomerase (192 aa).

Residues leucine 34–arginine 192 enclose the SIS domain. Asparagine 49–glycine 51 is a substrate binding site. Positions 58 and 62 each coordinate Zn(2+). Substrate-binding positions include glutamate 62, asparagine 91–aspartate 92, serine 117–serine 119, serine 122, and glutamine 169. Zn(2+) is bound by residues glutamine 169 and histidine 177.

This sequence belongs to the SIS family. GmhA subfamily. As to quaternary structure, homotetramer. It depends on Zn(2+) as a cofactor.

It localises to the cytoplasm. The enzyme catalyses 2 D-sedoheptulose 7-phosphate = D-glycero-alpha-D-manno-heptose 7-phosphate + D-glycero-beta-D-manno-heptose 7-phosphate. It participates in carbohydrate biosynthesis; D-glycero-D-manno-heptose 7-phosphate biosynthesis; D-glycero-alpha-D-manno-heptose 7-phosphate and D-glycero-beta-D-manno-heptose 7-phosphate from sedoheptulose 7-phosphate: step 1/1. Catalyzes the isomerization of sedoheptulose 7-phosphate in D-glycero-D-manno-heptose 7-phosphate. In Geotalea daltonii (strain DSM 22248 / JCM 15807 / FRC-32) (Geobacter daltonii), this protein is Phosphoheptose isomerase.